A 202-amino-acid chain; its full sequence is Superoxide dismutase [Mn], mitochondrial (202 aa).

A mitochondrion-targeting transit peptide spans His1–Met5. His31 is a Mn(2+) binding site. Tyr39 bears the 3'-nitrotyrosine mark. N6-acetyllysine; alternate is present on Lys49. An N6-succinyllysine; alternate modification is found at Lys49. Mn(2+) is bound at residue His79. An N6-acetyllysine modification is found at Lys95. N6-acetyllysine; alternate is present on residues Lys103 and Lys111. 2 positions are modified to N6-succinyllysine; alternate: Lys103 and Lys111. Mn(2+) contacts are provided by Asp164 and His168. The residue at position 183 (Lys183) is an N6-acetyllysine.

The protein belongs to the iron/manganese superoxide dismutase family. In terms of assembly, homotetramer. Mn(2+) is required as a cofactor. In terms of processing, nitrated under oxidative stress. Nitration coupled with oxidation inhibits the catalytic activity. Acetylation at Lys-122 decreases enzymatic activity. Deacetylated by SIRT3 upon exposure to ionizing radiations or after long fasting. Post-translationally, polyubiquitinated; leading to proteasomal degradation. Deubiquitinated by USP36 which increases protein stability.

The protein localises to the mitochondrion matrix. The enzyme catalyses 2 superoxide + 2 H(+) = H2O2 + O2. Functionally, destroys superoxide anion radicals which are normally produced within the cells and which are toxic to biological systems. In Oryctolagus cuniculus (Rabbit), this protein is Superoxide dismutase [Mn], mitochondrial (SOD2).